A 948-amino-acid chain; its full sequence is Protein translocase subunit SecA (948 aa).

ATP-binding positions include Q90, 108-112, and D509; that span reads GEGKT.

Belongs to the SecA family. In terms of assembly, monomer and homodimer. Part of the essential Sec protein translocation apparatus which comprises SecA, SecYEG and auxiliary proteins SecDF. Other proteins may also be involved.

It localises to the cell inner membrane. The protein localises to the cellular thylakoid membrane. Its subcellular location is the cytoplasm. The catalysed reaction is ATP + H2O + cellular proteinSide 1 = ADP + phosphate + cellular proteinSide 2.. In terms of biological role, part of the Sec protein translocase complex. Interacts with the SecYEG preprotein conducting channel. Has a central role in coupling the hydrolysis of ATP to the transfer of proteins into and across the cell membrane, serving as an ATP-driven molecular motor driving the stepwise translocation of polypeptide chains across the membrane. Functionally, probably participates in protein translocation into and across both the cytoplasmic and thylakoid membranes in cyanobacterial cells. The chain is Protein translocase subunit SecA from Prochlorococcus marinus (strain MIT 9313).